A 221-amino-acid chain; its full sequence is Ribonuclease 3 (221 aa).

An RNase III domain is found at M1–G123. E36 provides a ligand contact to Mg(2+). D40 is an active-site residue. D109 and E112 together coordinate Mg(2+). E112 is an active-site residue. One can recognise a DRBM domain in the interval D148 to V217.

Belongs to the ribonuclease III family. As to quaternary structure, homodimer. The cofactor is Mg(2+).

The protein resides in the cytoplasm. The catalysed reaction is Endonucleolytic cleavage to 5'-phosphomonoester.. Functionally, digests double-stranded RNA. Involved in the processing of primary rRNA transcript to yield the immediate precursors to the large and small rRNAs (23S and 16S). Processes some mRNAs, and tRNAs when they are encoded in the rRNA operon. Processes pre-crRNA and tracrRNA of type II CRISPR loci if present in the organism. This is Ribonuclease 3 from Mesorhizobium japonicum (strain LMG 29417 / CECT 9101 / MAFF 303099) (Mesorhizobium loti (strain MAFF 303099)).